The sequence spans 219 residues: Adenylate kinase (219 aa).

10–15 (GAGKGT) contacts ATP. The segment at 30 to 59 (STGDMLRVAVKVGTPLGIEAKKIMDSGGLV) is NMP. AMP-binding positions include Thr31, Arg36, 57-59 (GLV), 85-88 (GFPR), and Gln92. Residues 122–159 (GRRTHLKSGRTYHITYNQPKVEGIDDITGEKLVQRSDD) are LID. ATP-binding positions include Arg123 and 132 to 133 (TY). Residues Arg156 and Arg167 each coordinate AMP. Residue Gly202 coordinates ATP.

It belongs to the adenylate kinase family. Monomer.

The protein resides in the cytoplasm. It catalyses the reaction AMP + ATP = 2 ADP. It functions in the pathway purine metabolism; AMP biosynthesis via salvage pathway; AMP from ADP: step 1/1. Catalyzes the reversible transfer of the terminal phosphate group between ATP and AMP. Plays an important role in cellular energy homeostasis and in adenine nucleotide metabolism. The protein is Adenylate kinase of Vesicomyosocius okutanii subsp. Calyptogena okutanii (strain HA).